The sequence spans 74 residues: UPF0435 protein ABC2298 (74 aa).

This sequence belongs to the UPF0435 family.

The chain is UPF0435 protein ABC2298 from Shouchella clausii (strain KSM-K16) (Alkalihalobacillus clausii).